Consider the following 309-residue polypeptide: HPr kinase/phosphorylase (309 aa).

Residues His138 and Lys159 contribute to the active site. 153–160 (GQSGVGKS) lines the ATP pocket. Residue Ser160 participates in Mg(2+) binding. Asp177 serves as the catalytic Proton acceptor; for phosphorylation activity. Proton donor; for dephosphorylation activity. The interval 201–210 (LEIRGLGIIN) is important for the catalytic mechanism of both phosphorylation and dephosphorylation. A Mg(2+)-binding site is contributed by Glu202. Arg243 is a catalytic residue. The tract at residues 264–269 (PVRPGR) is important for the catalytic mechanism of dephosphorylation.

Belongs to the HPrK/P family. Homohexamer. Requires Mg(2+) as cofactor.

It catalyses the reaction [HPr protein]-L-serine + ATP = [HPr protein]-O-phospho-L-serine + ADP + H(+). The enzyme catalyses [HPr protein]-O-phospho-L-serine + phosphate + H(+) = [HPr protein]-L-serine + diphosphate. Catalyzes the ATP- as well as the pyrophosphate-dependent phosphorylation of a specific serine residue in HPr, a phosphocarrier protein of the phosphoenolpyruvate-dependent sugar phosphotransferase system (PTS). HprK/P also catalyzes the pyrophosphate-producing, inorganic phosphate-dependent dephosphorylation (phosphorolysis) of seryl-phosphorylated HPr (P-Ser-HPr). The two antagonistic activities of HprK/P are regulated by several intracellular metabolites, which change their concentration in response to the absence or presence of rapidly metabolisable carbon sources (glucose, fructose, etc.) in the growth medium. Also phosphorylates/dephosphorylates the HPr-like catabolite repression protein crh on a specific serine residue. Therefore, by controlling the phosphorylation state of HPr and crh, HPrK/P is a sensor enzyme that plays a major role in the regulation of carbon metabolism and sugar transport: it mediates carbon catabolite repression (CCR), and regulates PTS-catalyzed carbohydrate uptake and inducer exclusion. The chain is HPr kinase/phosphorylase from Bacillus mycoides (strain KBAB4) (Bacillus weihenstephanensis).